The sequence spans 180 residues: uncharacterized protein (180 aa).

The protein belongs to the CdaR family.

This is an uncharacterized protein from Thermomonospora curvata.